Reading from the N-terminus, the 111-residue chain is Disintegrin DS-AS (111 aa).

Positions methionine 1–cysteine 20 are cleaved as a signal peptide. A propeptide spanning residues isoleucine 21–methionine 47 is cleaved from the precursor. Residues methionine 47 to aspartate 111 form the Disintegrin domain. Cystine bridges form between cysteine 53–cysteine 76, cysteine 67–cysteine 73, cysteine 72–cysteine 97, and cysteine 85–cysteine 104. Residues arginine 89 to aspartate 91 carry the Cell attachment site motif.

Heterodimer; disulfide-linked.

The protein localises to the secreted. Inhibits ADP-induced platelet aggregation in human platelet-rich plasma (IC(50) is 8 uM). The sequence is that of Disintegrin DS-AS from Atheris squamigera (Variable bush viper).